A 1273-amino-acid chain; its full sequence is Chitin synthase 7 (1273 aa).

A disordered region spans residues 1-69; it reads MPAVERNAPF…LINPSSGGPG (69 aa). Residues 1 to 79 lie on the Cytoplasmic side of the membrane; sequence MPAVERNAPF…FSAASRSKHR (79 aa). A helical membrane pass occupies residues 80-100; the sequence is FSWWTAFSLFVTFWAPSPLLS. The Extracellular portion of the chain corresponds to 101–117; it reads SCCGLKDKQSRQAWREK. Residues 118 to 138 traverse the membrane as a helical segment; the sequence is VSLVFIAILLGGFIGFITMGL. Residues 139 to 360 lie on the Cytoplasmic side of the membrane; sequence NAALCPSASS…FISNLVLYCS (222 aa). The helical transmembrane segment at 361–381 threads the bilayer; the sequence is LVVILAIVLIRFFMAVWFAWF. Topologically, residues 382–820 are extracellular; it reads MAGRMSSPPR…LCGTFCFSMQ (439 aa). N-linked (GlcNAc...) asparagine glycosylation is present at Asn-412. The tract at residues 416–451 is disordered; that stretch reads AAPWANKQRPPPSQPARRRRDSAQSATPSVPDSLSV. N-linked (GlcNAc...) asparagine glycosylation is found at Asn-667 and Asn-796. The helical transmembrane segment at 821-841 threads the bilayer; it reads FVVFMDLLGTAVLPISIALTY. Residues 842–857 lie on the Cytoplasmic side of the membrane; it reads TLVVTYCLNPPHSFTE. A helical transmembrane segment spans residues 858-878; it reads AIPLMLLVAVIGMPALLILLA. Over 879–881 the chain is Extracellular; sequence TRK. The helical transmembrane segment at 882 to 902 threads the bilayer; sequence VVYVLWMLIYLLALPVWNFVL. The Cytoplasmic portion of the chain corresponds to 903–1273; that stretch reads PVYSFWHFDD…RGRSYHDRFS (371 aa). 2 disordered regions span residues 966–1009 and 1126–1273; these read RELE…SVTV and NGGG…DRFS. Low complexity predominate over residues 1000-1009; that stretch reads SDSFSDSVTV. Pro residues predominate over residues 1215–1232; the sequence is QHPPQPSQPPQPPQPAQP. Over residues 1233-1246 the composition is skewed to low complexity; it reads TRPGGAPAAPPRGA.

It belongs to the chitin synthase family. Class IV subfamily.

The protein resides in the cell membrane. Its subcellular location is the cytoplasmic vesicle membrane. It carries out the reaction [(1-&gt;4)-N-acetyl-beta-D-glucosaminyl](n) + UDP-N-acetyl-alpha-D-glucosamine = [(1-&gt;4)-N-acetyl-beta-D-glucosaminyl](n+1) + UDP + H(+). Its function is as follows. Polymerizes chitin, a structural polymer of the cell wall and septum, by transferring the sugar moiety of UDP-GlcNAc to the non-reducing end of the growing chitin polymer. The polypeptide is Chitin synthase 7 (Mycosarcoma maydis (Corn smut fungus)).